Consider the following 1191-residue polypeptide: Puratrophin-1 (1191 aa).

Disordered stretches follow at residues 1–152 and 707–728; these read MERP…DPVG and AGGG…SDPR. Serine 64 is subject to Phosphoserine. Residues 111-120 show a composition bias toward polar residues; sequence SHLSLAQGES. One can recognise a DH domain in the interval 732-908; the sequence is RLQLVLAEMV…HFQLRHGNDL (177 aa). One can recognise a PH domain in the interval 920–1027; sequence NLKEQGQLVR…WTADISHLLW (108 aa). The interval 1150–1176 is disordered; it reads SLTAEDSEISSQCPSASGSSGSDSSCV. A compositionally biased stretch (low complexity) spans 1159 to 1176; the sequence is SSQCPSASGSSGSDSSCV.

Expressed in kidney, Leydig cells in the testis, epithelial cells in the prostate gland and Langerhans islet in the pancreas. Isoform 1 and isoform 3 are strongly expressed in Purkinje cells and to a lower extent in other neurons (at protein level). Widely expressed at low levels. More strongly expressed in testis and pancreas.

Possible role in intracellular signaling and cytoskeleton dynamics at the Golgi. This chain is Puratrophin-1 (PLEKHG4), found in Homo sapiens (Human).